A 214-amino-acid polypeptide reads, in one-letter code: Thiamine-phosphate synthase (214 aa).

Residues 37–41 (QYREK) and asparagine 73 each bind 4-amino-2-methyl-5-(diphosphooxymethyl)pyrimidine. Residues aspartate 74 and aspartate 93 each contribute to the Mg(2+) site. Serine 112 contacts 4-amino-2-methyl-5-(diphosphooxymethyl)pyrimidine. Position 139-141 (139-141 (TIS)) interacts with 2-[(2R,5Z)-2-carboxy-4-methylthiazol-5(2H)-ylidene]ethyl phosphate. Residue lysine 142 coordinates 4-amino-2-methyl-5-(diphosphooxymethyl)pyrimidine. Residues glycine 171 and 191-192 (IS) each bind 2-[(2R,5Z)-2-carboxy-4-methylthiazol-5(2H)-ylidene]ethyl phosphate.

Belongs to the thiamine-phosphate synthase family. It depends on Mg(2+) as a cofactor.

It catalyses the reaction 2-[(2R,5Z)-2-carboxy-4-methylthiazol-5(2H)-ylidene]ethyl phosphate + 4-amino-2-methyl-5-(diphosphooxymethyl)pyrimidine + 2 H(+) = thiamine phosphate + CO2 + diphosphate. The catalysed reaction is 2-(2-carboxy-4-methylthiazol-5-yl)ethyl phosphate + 4-amino-2-methyl-5-(diphosphooxymethyl)pyrimidine + 2 H(+) = thiamine phosphate + CO2 + diphosphate. It carries out the reaction 4-methyl-5-(2-phosphooxyethyl)-thiazole + 4-amino-2-methyl-5-(diphosphooxymethyl)pyrimidine + H(+) = thiamine phosphate + diphosphate. The protein operates within cofactor biosynthesis; thiamine diphosphate biosynthesis; thiamine phosphate from 4-amino-2-methyl-5-diphosphomethylpyrimidine and 4-methyl-5-(2-phosphoethyl)-thiazole: step 1/1. In terms of biological role, condenses 4-methyl-5-(beta-hydroxyethyl)thiazole monophosphate (THZ-P) and 2-methyl-4-amino-5-hydroxymethyl pyrimidine pyrophosphate (HMP-PP) to form thiamine monophosphate (TMP). This Listeria monocytogenes serotype 4b (strain F2365) protein is Thiamine-phosphate synthase.